Consider the following 444-residue polypeptide: N-succinylarginine dihydrolase (444 aa).

Residues 19–28, asparagine 110, and 137–138 each bind substrate; these read AGLSFGNVAS and HR. Residue glutamate 174 is part of the active site. Position 214 (arginine 214) interacts with substrate. Histidine 250 is an active-site residue. Substrate-binding residues include aspartate 252 and asparagine 362. The active-site Nucleophile is the cysteine 368.

It belongs to the succinylarginine dihydrolase family. As to quaternary structure, homodimer.

The catalysed reaction is N(2)-succinyl-L-arginine + 2 H2O + 2 H(+) = N(2)-succinyl-L-ornithine + 2 NH4(+) + CO2. The protein operates within amino-acid degradation; L-arginine degradation via AST pathway; L-glutamate and succinate from L-arginine: step 2/5. Functionally, catalyzes the hydrolysis of N(2)-succinylarginine into N(2)-succinylornithine, ammonia and CO(2). In Shewanella baltica (strain OS185), this protein is N-succinylarginine dihydrolase.